The primary structure comprises 978 residues: Mast/stem cell growth factor receptor Kit (978 aa).

A signal peptide spans 1–25 (MRGARGAWDFLFVLLLLLLVQTGSS). Over 26 to 525 (QPSVSPGELS…QIHAHTLFTP (500 aa)) the chain is Extracellular. Ig-like C2-type domains lie at 27-112 (PSVS…VFVR), 121-205 (DLPL…LKVR), 212-309 (PVVS…LEVV), 318-411 (PMMN…VNVN), and 414-508 (PEIL…FNFA). C58 and C97 form a disulfide bridge. N-linked (GlcNAc...) asparagine glycosylation is found at N94, N130, and N145. 3 cysteine pairs are disulfide-bonded: C136-C186, C151-C183, and C233-C291. 9 N-linked (GlcNAc...) asparagine glycosylation sites follow: N284, N294, N301, N321, N353, N368, N401, N464, and N487. An intrachain disulfide couples C429 to C492. A helical transmembrane segment spans residues 526–546 (LLIGFVIAAGLMCIFVMILTY). Over 547–978 (KYLQKPMYEV…TQPLLVHEDV (432 aa)) the chain is Cytoplasmic. Y548 and Y554 each carry phosphotyrosine. Residue Y569 participates in Mg(2+) binding. Phosphotyrosine; by autocatalysis is present on residues Y569 and Y571. Positions 569-571 (YVY) are important for interaction with phosphotyrosine-binding proteins. Positions 590–939 (LSFGKTLGAG…ISESTNHIYS (350 aa)) constitute a Protein kinase domain. Residues 597 to 604 (GAGAFGKV), K624, and 672 to 678 (EYCCYGD) each bind ATP. A phosphotyrosine; by autocatalysis mark is found at Y704 and Y722. A Phosphotyrosine modification is found at Y731. 2 positions are modified to phosphoserine; by PKC/PRKCA: S743 and S748. Catalysis depends on D794, which acts as the Proton acceptor. R798 serves as a coordination point for ATP. N799 and D812 together coordinate Mg(2+). Residue S823 is modified to Phosphoserine. Y825 is subject to Phosphotyrosine; by autocatalysis. A Phosphoserine modification is found at S893. Y902 is subject to Phosphotyrosine. A Phosphotyrosine; by autocatalysis modification is found at Y938. S961 is subject to Phosphoserine.

This sequence belongs to the protein kinase superfamily. Tyr protein kinase family. CSF-1/PDGF receptor subfamily. In terms of assembly, monomer in the absence of bound KITLG/SCF. Homodimer in the presence of bound KITLG/SCF, forming a heterotetramer with two KITLG/SCF molecules. Interacts (via phosphorylated tyrosine residues) with the adapter proteins GRB2 and GRB7 (via SH2 domain), and SH2B2/APS. Interacts (via C-terminus) with MPDZ (via the tenth PDZ domain). Interacts (via phosphorylated tyrosine residues) with PIK3R1 and PIK3CD. Interacts (via phosphorylated tyrosine) with CRK (isoform Crk-II), FYN, SHC1 and MATK/CHK (via SH2 domain). Interacts with LYN and FES/FPS. Interacts (via phosphorylated tyrosine residues) with the protein phosphatases PTPN6/SHP-1 (via SH2 domain), PTPN11/SHP-2 (via SH2 domain) and PTPRU. Interacts with PLCG1. Interacts with DOK1 and TEC. Interacts with IL1RAP (independent of stimulation with KITLG/SCF). A mast cell-specific KITLG/SCF-induced interleukin-33 signaling complex contains IL1RL1, IL1RAP, KIT and MYD88. In terms of processing, ubiquitinated by SOCS6. KIT is rapidly ubiquitinated after autophosphorylation induced by KITLG/SCF binding, leading to internalization and degradation. Post-translationally, autophosphorylated on tyrosine residues. KITLG/SCF binding promotes autophosphorylation. Phosphorylated tyrosine residues are important for interaction with specific binding partners.

The protein resides in the cell membrane. It catalyses the reaction L-tyrosyl-[protein] + ATP = O-phospho-L-tyrosyl-[protein] + ADP + H(+). With respect to regulation, present in an inactive conformation in the absence of bound ligand. KITLG/SCF binding leads to dimerization and activation by autophosphorylation on tyrosine residues. Activity is down-regulated by PRKCA-mediated phosphorylation on serine residues. Tyrosine-protein kinase that acts as a cell-surface receptor for the cytokine KITLG/SCF and plays an essential role in the regulation of cell survival and proliferation, hematopoiesis, stem cell maintenance, gametogenesis, mast cell development, migration and function, and in melanogenesis. In response to KITLG/SCF binding, KIT can activate several signaling pathways. Phosphorylates PIK3R1, PLCG1, SH2B2/APS and CBL. Activates the AKT1 signaling pathway by phosphorylation of PIK3R1, the regulatory subunit of phosphatidylinositol 3-kinase. Activated KIT also transmits signals via GRB2 and activation of RAS, RAF1 and the MAP kinases MAPK1/ERK2 and/or MAPK3/ERK1. Promotes activation of STAT family members STAT1, STAT3, STAT5A and STAT5B. Activation of PLCG1 leads to the production of the cellular signaling molecules diacylglycerol and inositol 1,4,5-trisphosphate. KIT signaling is modulated by protein phosphatases, and by rapid internalization and degradation of the receptor. Activated KIT promotes phosphorylation of the protein phosphatases PTPN6/SHP-1 and PTPRU, and of the transcription factors STAT1, STAT3, STAT5A and STAT5B. Promotes phosphorylation of PIK3R1, CBL, CRK (isoform Crk-II), LYN, MAPK1/ERK2 and/or MAPK3/ERK1, PLCG1, SRC and SHC1. The protein is Mast/stem cell growth factor receptor Kit (KIT) of Capra hircus (Goat).